Here is a 65-residue protein sequence, read N- to C-terminus: Small ribosomal subunit protein eS27 (65 aa).

4 residues coordinate Zn(2+): C21, C24, C40, and C43. The C4-type zinc finger occupies 21 to 43 (CKDCGNVQVVFARPSSVVTCNIC).

It belongs to the eukaryotic ribosomal protein eS27 family. Part of the 30S ribosomal subunit. Zn(2+) is required as a cofactor.

The chain is Small ribosomal subunit protein eS27 from Thermoplasma volcanium (strain ATCC 51530 / DSM 4299 / JCM 9571 / NBRC 15438 / GSS1).